The primary structure comprises 505 residues: Bifunctional NAD(P)H-hydrate repair enzyme Nnr (505 aa).

The tract at residues 1–219 (MKPTFPAIVT…SVVIETALAS (219 aa)) is NAD(P)H-hydrate epimerase. Residues 14-214 (MQAIEGAMFN…PFDIPSVVIE (201 aa)) enclose the YjeF N-terminal domain. Residues 63–67 (HNGGD) are NADPHX 1; for epimerase activity. Asparagine 64 and aspartate 124 together coordinate K(+). An NADPHX 1; for epimerase activity region spans residues 128-134 (GFGLERE). A (6S)-NADPHX-binding site is contributed by aspartate 157. A K(+)-binding site is contributed by serine 160. The 275-residue stretch at 226–500 (LDDSCWQALP…AHLLPTLRRA (275 aa)) folds into the YjeF C-terminal domain. Residues 227–505 (DDSCWQALPL…TLRRALAARV (279 aa)) are ADP-dependent (S)-NAD(P)H-hydrate dehydratase. Glycine 330 lines the (6S)-NADPHX pocket. An NADPHX 2; for dehydratase activity region spans residues 376–382 (HYGEFRR). ADP contacts are provided by residues 412-416 (KGART) and 432-441 (TPALARGGSG). Position 442 (aspartate 442) interacts with (6S)-NADPHX.

In the N-terminal section; belongs to the NnrE/AIBP family. This sequence in the C-terminal section; belongs to the NnrD/CARKD family. K(+) is required as a cofactor.

It catalyses the reaction (6S)-NADHX + ADP = AMP + phosphate + NADH + H(+). The enzyme catalyses (6S)-NADPHX + ADP = AMP + phosphate + NADPH + H(+). It carries out the reaction (6R)-NADHX = (6S)-NADHX. The catalysed reaction is (6R)-NADPHX = (6S)-NADPHX. Its function is as follows. Bifunctional enzyme that catalyzes the epimerization of the S- and R-forms of NAD(P)HX and the dehydration of the S-form of NAD(P)HX at the expense of ADP, which is converted to AMP. This allows the repair of both epimers of NAD(P)HX, a damaged form of NAD(P)H that is a result of enzymatic or heat-dependent hydration. The polypeptide is Bifunctional NAD(P)H-hydrate repair enzyme Nnr (nnr) (Thermosynechococcus vestitus (strain NIES-2133 / IAM M-273 / BP-1)).